The sequence spans 464 residues: Glutamate--tRNA ligase (464 aa).

The 'HIGH' region signature appears at 8 to 18; the sequence is PSPTGYMHLGN. Zn(2+) is bound by residues Cys96, Cys98, Cys123, and His125. Positions 240-244 match the 'KMSKS' region motif; the sequence is KLSKR. Lys243 is a binding site for ATP.

It belongs to the class-I aminoacyl-tRNA synthetase family. Glutamate--tRNA ligase type 1 subfamily. In terms of assembly, monomer. It depends on Zn(2+) as a cofactor.

The protein resides in the cytoplasm. It catalyses the reaction tRNA(Glu) + L-glutamate + ATP = L-glutamyl-tRNA(Glu) + AMP + diphosphate. Functionally, catalyzes the attachment of glutamate to tRNA(Glu) in a two-step reaction: glutamate is first activated by ATP to form Glu-AMP and then transferred to the acceptor end of tRNA(Glu). The sequence is that of Glutamate--tRNA ligase from Hydrogenobaculum sp. (strain Y04AAS1).